The chain runs to 451 residues: Spermidine sinapoyl-CoA acyltransferase (451 aa).

The spermidine site is built by tyrosine 47, histidine 169, serine 294, aspartate 316, and leucine 378. Catalysis depends on histidine 169, which acts as the Proton acceptor. The active-site Proton acceptor is the aspartate 391.

This sequence belongs to the plant acyltransferase family. Monomer. As to expression, predominantly expressed in siliques, especially in seeds around the embryo, and, at low levels, in flowers. Barely detectable in stems, leaves, and roots.

It catalyses the reaction 2 (E)-sinapoyl-CoA + spermidine = N(1),N(8)-bis[(E)-sinapoyl]-spermidine + 2 CoA + 2 H(+). Its pathway is amine and polyamine metabolism; spermidine metabolism. Functionally, spermidine sinapoyl-CoA acyltransferase that mediates the accumulation of disinapoyl spermidine conjugates in seeds. Catalyzes the two conjugating steps required for the biosynthesis of N1,N8-disipanoyl-spermidine. Can also use putrescine as an acyl acceptor to convert it into monosinapoyl-putrescine. The protein is Spermidine sinapoyl-CoA acyltransferase of Arabidopsis thaliana (Mouse-ear cress).